Here is a 123-residue protein sequence, read N- to C-terminus: PTS system glucitol/sorbitol-specific EIIA component (123 aa).

Residues 1-116 enclose the PTS EIIA type-5 domain; it reads MTVIYQTTIT…PDDIAPGSVL (116 aa). The active-site Tele-phosphohistidine intermediate is histidine 43. Histidine 43 is modified (phosphohistidine; by HPr).

The protein localises to the cytoplasm. Functionally, the phosphoenolpyruvate-dependent sugar phosphotransferase system (sugar PTS), a major carbohydrate active transport system, catalyzes the phosphorylation of incoming sugar substrates concomitantly with their translocation across the cell membrane. The enzyme II complex composed of SrlA, SrlB and SrlE is involved in glucitol/sorbitol transport. The polypeptide is PTS system glucitol/sorbitol-specific EIIA component (srlB) (Shigella flexneri).